A 546-amino-acid polypeptide reads, in one-letter code: uncharacterized protein (546 aa).

Helical transmembrane passes span 27–46 (EALV…PFVF), 59–78 (NGLI…ALVT), 83–100 (FALI…YAIL), 114–134 (SVLF…AYAA), 143–163 (PLII…IPIF), 176–196 (MLYS…ALGI), 204–224 (VIAV…VFTA), 237–257 (LSSA…FGVF), and 268–288 (MIWI…LIGW).

The protein localises to the cell membrane. This is an uncharacterized protein from Bacillus subtilis (strain 168).